A 384-amino-acid polypeptide reads, in one-letter code: UPF0496 protein At3g28310/At3g28320 (384 aa).

Residues 184–215 adopt a coiled-coil conformation; sequence QESLFDRVTETKERIAKEIEEVQKRISNVNTA. A run of 2 helical transmembrane segments spans residues 217–237 and 242–262; these read IVSH…CIAL and VGAP…VQWV. Residues 264 to 361 are a coiled coil; it reads VNYVLNNSLE…TTKITEVCET (98 aa).

It belongs to the UPF0496 family.

It is found in the membrane. This Arabidopsis thaliana (Mouse-ear cress) protein is UPF0496 protein At3g28310/At3g28320.